We begin with the raw amino-acid sequence, 199 residues long: NAD(P)H dehydrogenase (quinone) (199 aa).

One can recognise a Flavodoxin-like domain in the interval 4-190; it reads VLVLYYSSYG…TGARYQGRKI (187 aa). Residues 10 to 15 and 78 to 80 each bind FMN; these read SSYGHL and TRF. Y12 provides a ligand contact to NAD(+). W98 is a binding site for substrate. Residues 113–119 and H134 each bind FMN; that span reads STATQHG.

It belongs to the WrbA family. The cofactor is FMN.

It catalyses the reaction a quinone + NADH + H(+) = a quinol + NAD(+). The catalysed reaction is a quinone + NADPH + H(+) = a quinol + NADP(+). This Caulobacter vibrioides (strain ATCC 19089 / CIP 103742 / CB 15) (Caulobacter crescentus) protein is NAD(P)H dehydrogenase (quinone).